The chain runs to 1263 residues: Topoisomerase 1-associated factor 1 (1263 aa).

Disordered regions lie at residues 1042 to 1098 (ERQL…DDSQ) and 1178 to 1263 (VEES…DEEE). Positions 1060 to 1071 (TKGKARKKSKEK) are enriched in basic residues. Positions 1179 to 1189 (EESDNDDEVEE) are enriched in acidic residues. A compositionally biased stretch (polar residues) spans 1211–1226 (VDTQQDLSDNTSNTSD).

Belongs to the timeless family. In terms of assembly, component of the fork protection complex (FPC) consisting of TOF1 and CSM3.

The protein localises to the nucleus. Forms a fork protection complex (FPC) with CSM3 and which is required for chromosome segregation during meiosis and DNA damage repair. FPC coordinates leading and lagging strand synthesis and moves with the replication fork. FPC stabilizes replication forks in a configuration that is recognized by replication checkpoint sensors. The polypeptide is Topoisomerase 1-associated factor 1 (YBL053) (Candida albicans (strain SC5314 / ATCC MYA-2876) (Yeast)).